We begin with the raw amino-acid sequence, 71 residues long: uncharacterized protein (71 aa).

It localises to the mitochondrion matrix. The protein localises to the kinetoplast. This is an uncharacterized protein from Trypanosoma brucei brucei.